Here is a 438-residue protein sequence, read N- to C-terminus: chitinase-like effector (438 aa).

An N-terminal signal peptide occupies residues 1-23 (MFTPLSSVTALLALSSAFLGAQA). Residues 54-437 (FIAKGYYTGW…DAIRSGAGLS (384 aa)) form the GH18 domain. A chitin-binding site is contributed by Trp-416.

It belongs to the glycosyl hydrolase 18 family.

The protein localises to the secreted. Its function is as follows. Catalytically impaired chitinase that binds efficiently to chitin, but not to chitosan, xylan, or cellulose. Despite the lack of chitinolytic activity, retains substrate binding specificity and acts as an effector to prevent chitin-triggered immunity by sequestering immunogenic chitin fragments. Does not function in the protection of fungal cell wall against plant hydrolytic enzymes. In Moniliophthora perniciosa (Witches'-broom disease fungus), this protein is chitinase-like effector.